The chain runs to 369 residues: DNA replication and repair protein RecF (369 aa).

30–37 (GDNAQGKT) is a binding site for ATP.

It belongs to the RecF family.

The protein localises to the cytoplasm. In terms of biological role, the RecF protein is involved in DNA metabolism; it is required for DNA replication and normal SOS inducibility. RecF binds preferentially to single-stranded, linear DNA. It also seems to bind ATP. The sequence is that of DNA replication and repair protein RecF from Streptococcus equi subsp. zooepidemicus (strain H70).